Here is a 110-residue protein sequence, read N- to C-terminus: HTH-type transcriptional regulator TnrA (110 aa).

One can recognise an HTH merR-type domain in the interval 13–81; that stretch reads VISIGIVSEL…TAEILKDMRK (69 aa). The segment at residues 16 to 35 is a DNA-binding region (H-T-H motif); the sequence is IGIVSELTGLSVRQIRYYEE.

Homodimer. Under conditions of nitrogen excess, TnrA forms a stable complex with feedback-inhibited GlnA. Interacts with GlnK-AmtB complex.

Its subcellular location is the cell membrane. With respect to regulation, under conditions of nitrogen excess, the DNA-binding activity is inhibited by the formation of a stable complex with feedback-inhibited GlnA. The presence of glutamine and AMP increases the inhibitory activity of glutamine synthetase by more than 1000-fold. Its function is as follows. Transcription regulator that actives the transcription of genes required for nitrogen assimilation such as nrgAB (ammonium transport), nasABCDEF (nitrate/nitrite assimilation), ureABC (urea degradation) and gabP (GABA transport), during nitrogen limitation. Also represses glnRA and gltAB in the absence of ammonium. On the contrary of the MerR members, which require longer DNA sites for high-affinity binding, TnrA requires a DNA sequence of 17 nucleotides as minimal binding site. The sequence is that of HTH-type transcriptional regulator TnrA from Bacillus subtilis (strain 168).